The primary structure comprises 379 residues: Galactose-1-phosphate uridylyltransferase (379 aa).

Basic and acidic residues predominate over residues 1–10 (MSHSGADPEQ). A disordered region spans residues 1–20 (MSHSGADPEQRQQASEADAM). Cysteine 75 lines the Zn(2+) pocket. UDP-alpha-D-glucose-binding positions include alanine 81, 97–98 (ND), and asparagine 173. Residue histidine 184 participates in Zn(2+) binding. Catalysis depends on histidine 186, which acts as the Tele-UMP-histidine intermediate. Glutamine 188 serves as a coordination point for UDP-alpha-D-glucose. Zn(2+) is bound by residues glutamate 202, histidine 301, histidine 319, and histidine 321. UDP-alpha-D-glucose is bound by residues 334 to 337 (KFMV) and 339 to 340 (YE).

Belongs to the galactose-1-phosphate uridylyltransferase type 1 family. In terms of assembly, homodimer. It depends on Zn(2+) as a cofactor.

The catalysed reaction is alpha-D-galactose 1-phosphate + UDP-alpha-D-glucose = alpha-D-glucose 1-phosphate + UDP-alpha-D-galactose. The protein operates within carbohydrate metabolism; galactose metabolism. Its function is as follows. Plays an important role in galactose metabolism. This chain is Galactose-1-phosphate uridylyltransferase (Galt), found in Mus musculus (Mouse).